Consider the following 516-residue polypeptide: Exoglucanase 1 (516 aa).

The first 17 residues, 1–17 (MRASLLAFSLAAAVAGG), serve as a signal peptide directing secretion. Positions 18–445 (QQAGTLTAKR…GHLGISPFSG (428 aa)) are catalytic. N-linked (GlcNAc...) asparagine glycosylation is present at asparagine 45. Glutamate 223 (nucleophile) is an active-site residue. Glutamate 228 serves as the catalytic Proton donor. Asparagine 281 carries an N-linked (GlcNAc...) asparagine glycan. Positions 444-481 (SGGSSGTPPSNPSSSASPTSSTAKPSSTSTASNPSGTG) are disordered. Residues 446-480 (GSSGTPPSNPSSSASPTSSTAKPSSTSTASNPSGT) form a linker region. Residues 449–481 (GTPPSNPSSSASPTSSTAKPSSTSTASNPSGTG) show a composition bias toward low complexity. The CBM1 domain occupies 480-516 (TGAAHWAQCGGIGFSGPTTCPEPYTCAKDHDIYSQCV). Disulfide bonds link cysteine 488–cysteine 505 and cysteine 499–cysteine 515.

This sequence belongs to the glycosyl hydrolase 7 (cellulase C) family.

The protein resides in the secreted. The catalysed reaction is Hydrolysis of (1-&gt;4)-beta-D-glucosidic linkages in cellulose and cellotetraose, releasing cellobiose from the non-reducing ends of the chains.. The protein is Exoglucanase 1 (cbh-1) of Neurospora crassa (strain ATCC 24698 / 74-OR23-1A / CBS 708.71 / DSM 1257 / FGSC 987).